The chain runs to 599 residues: MFS-type transporter ucsM (599 aa).

Basic and acidic residues predominate over residues 23–34; it reads AHHHGKEREAHR. The interval 23 to 42 is disordered; it reads AHHHGKEREAHRQSLSSVPG. 8 consecutive transmembrane segments (helical) span residues 147 to 167, 178 to 198, 204 to 224, 263 to 283, 291 to 311, 386 to 406, 424 to 444, and 454 to 474; these read VALG…GAWL, ILIG…GAVP, GKGT…AGLF, IMLI…ATVY, WLAF…LWYL, IFLY…ILPS, FNPI…YPAL, and ISRI…SSLV. Asn-517 carries N-linked (GlcNAc...) asparagine glycosylation. 2 consecutive transmembrane segments (helical) span residues 539 to 559 and 563 to 583; these read LFLF…PAIV and LVWV…IFWV.

The protein belongs to the major facilitator superfamily. Proton-dependent oligopeptide transporter (POT/PTR) (TC 2.A.17) family.

The protein localises to the membrane. Functionally, MFS-type transporter; part of the gene cluster that mediates the biosynthesis of UCS1025A, a member of the pyrrolizidinone family that acts as a strong telomerase inhibitor and displays potent antibacterial and antitumor properties. These compounds share a hemiaminal-containing pyrrolizidinone core fused with a gamma-lactone, giving a furopyrrolizidine that is connected to a decalin fragment. This chain is MFS-type transporter ucsM, found in Acremonium sp.